The sequence spans 76 residues: Small proline-rich protein 2I (76 aa).

A run of 3 repeats spans residues 21–29 (KKCPEPCPP), 30–38 (PQCPEPCPP), and 39–47 (PKCPEPCPE). A 3 X 9 AA approximate tandem repeats region spans residues 21 to 47 (KKCPEPCPPPQCPEPCPPPKCPEPCPE). Over residues 40–53 (KCPEPCPESCPPPS) the composition is skewed to pro residues. Residues 40–76 (KCPEPCPESCPPPSYQQKCPPVQPPPPCQQKCPPKSK) are disordered.

Belongs to the cornifin (SPRR) family. As to expression, not expressed in uterus.

It localises to the cytoplasm. In terms of biological role, cross-linked envelope protein of keratinocytes. It is a keratinocyte protein that first appears in the cell cytosol, but ultimately becomes cross-linked to membrane proteins by transglutaminase. All that results in the formation of an insoluble envelope beneath the plasma membrane. The polypeptide is Small proline-rich protein 2I (Sprr2i) (Mus musculus (Mouse)).